The chain runs to 421 residues: Histidine--tRNA ligase (421 aa).

This sequence belongs to the class-II aminoacyl-tRNA synthetase family. As to quaternary structure, homodimer.

The protein resides in the cytoplasm. It catalyses the reaction tRNA(His) + L-histidine + ATP = L-histidyl-tRNA(His) + AMP + diphosphate + H(+). This is Histidine--tRNA ligase from Francisella tularensis subsp. holarctica (strain FTNF002-00 / FTA).